Consider the following 110-residue polypeptide: MLKYVVTDIGKMCLYIWPYRVWSWRRLFIFRVLNVVSIAILFETPHRLALVPNVCLYTHMAIPLSTCLFCLCLCICIKYDITQTQANNQFLASFFVLILTINDLDVTFVI.

Transmembrane regions (helical) follow at residues 32–52, 57–77, and 90–110; these read VLNV…ALVP, YTHM…CICI, and FLAS…TFVI.

Its subcellular location is the membrane. Its function is as follows. May play a role in proper chromosome segregation. Suppresses the high-frequency loss of mini-chromosomes when overexpressed, and this suppression is completely dependent on silencing protein SIR4. This is an uncharacterized protein from Saccharomyces cerevisiae (strain ATCC 204508 / S288c) (Baker's yeast).